The following is a 270-amino-acid chain: MGDTAEDQDDRAMMEAEGVTSFSELLMFSDGVLSSSSDHQPEGNVGDGGEDSLGFVFSGKTGSRMLCFSGGYQNDDESLFLEPSVPTSGVSDLDPSCIKIDCRNSNDACTVDKSTKSSTKKRTGTGNGQESDQNRKPGKKGKRNQEKSSVGIAKVRKERLGERIAALQQLVSPYGKTDAASVLHEAMGYIKFLQDQIQVLCSPYLINHSLDGGVVTGDVMAAMKAKDLRSRGLCLVPVSSTVHVENSNGADFWSPATMGHTTSPSLPQGF.

The interval 109 to 153 is disordered; the sequence is CTVDKSTKSSTKKRTGTGNGQESDQNRKPGKKGKRNQEKSSVGIA. In terms of domain architecture, bHLH spans 144–193; it reads NQEKSSVGIAKVRKERLGERIAALQQLVSPYGKTDAASVLHEAMGYIKFL.

As to quaternary structure, homodimer.

The protein localises to the nucleus. This is Transcription factor bHLH113 (BHLH113) from Arabidopsis thaliana (Mouse-ear cress).